Reading from the N-terminus, the 1315-residue chain is MTGEVGSEVNLEVNDLKLLSQEAADSPVDSGQGSFETLEPLSERDSDEEIFVSKKPKSRKVLQDSDSEAEDRDDAPEKPTYDDSAEDTQENLHSGKSQSRSFPKALADSDESDMEETPSQESPETQEAPSLEPGHQTGHSVDFTTGRKLSKTLLREGAEGKAKSKRRLEKEERTMEKIRRLKKKETRCEESDADRPLNDSGCLLEDSDLFETGLEEENDSALEDEESLESIRAAVKNKVKNRKKKEPTLESEAFSLEDGNELSKGSARKERKAARLSKEALKKLHSETQRLVRESALNLPYHMPESKTIHDFFKRKPRPTCQGSAMALLKSCKYQSGHYKETVNPADAAGMGAEDSSRGSEQRTGAGIAAETNVLSEVSEEAGITAGSDEACGKDPVRRGELEIEETEKHSDDRPYSPGDRSMSQQESSIPRIEDNEGHQAGDLTESDPPALEGEELKTVEKTDAKEGMPEQKTQSAAAAAVAVVTAAAAPPEKVRRFTVDRLRQLGVDVSSQPRLGADEDSFVILDEPKTNRELEALKQRFWRHANPAASPRACQTVNVNIIVKDLGTNGKEELKAEVVPVTLAAEKLEGASHAKPGEKLQMLKAKLQEAMKLRRLEERQKRQALFKLDNEDGFEEEEEEEEMTDESEEDGEEETTEYLLGSEDTETKDEKETDKENTDTSSDIGKSVALCVPKPLSSDSTLLLFKDSSSKMGYFPTEEKSETDEYLAKQSDKLDEDDSSSLLTKESSHNSSFELIGSTIPSYQPCNRQIGRGASFLPTAGFRSPSPGLFRGSLISSASKSSGKLSEPSLPVEDSQDLYTASPEPKTLFLGAGDFQFCLEDDTQSQLLDADGFLNIRNHRHRYQAVKPQLPLASMDENAMDANMDELLDLCTGQFTSQPEEKCQPRKNDKKENMEELLNLCSGKFPTQDASPVAPLGLRSQEKESSTEDPMEEALALCSGSFPTDREEEGEEEEFGDFQLVSKENGFASDEDEHSDSNDEELALDLEDDEEELLKQSEKMKRQMRLKKYLEDEAEVSGSDVGSEDEYDGEEIDEYEEDVIDEVLPSDEELESQIKKIHMKTMLDDDKRRLRLYQERYLADGDLHSDGPGRTRKFRWKHIDDTSQMDLFHRDSDDDQVEEQLDETEAKWRKERIEREQWLREQAQQGKIAADEEDIGDDSQFMMLAKKVTAKALQKNASHTVVVQESKSVLRNPFETIRPGGAHQLKTGSLLNQPKAVLQKLAALSDLNPSAPRNSRNFVFHTLSPTKAEAAKDSSKPQVRRRGLSSMMSPSPKRLKTNGSSPGPKRSIFRYLES.

2 disordered regions span residues 22-276 and 345-474; these read EAAD…AARL and PADA…EQKT. Residues Ser26, Ser42, Ser46, Ser53, Ser65, and Ser67 each carry the phosphoserine modification. The segment covering 65-74 has biased composition (acidic residues); that stretch reads SDSEAEDRDD. Residues 91 to 101 show a composition bias toward polar residues; sequence NLHSGKSQSRS. The span at 108-118 shows a compositional bias: acidic residues; sequence DSDESDMEETP. Phosphoserine is present on residues Ser109, Ser112, and Ser119. Residues 119-128 are compositionally biased toward polar residues; that stretch reads SQESPETQEA. Composition is skewed to basic and acidic residues over residues 153-178 and 186-197; these read LLRE…MEKI and TRCEESDADRPL. Residues 159–187 adopt a coiled-coil conformation; that stretch reads EGKAKSKRRLEKEERTMEKIRRLKKKETR. Residues 205 to 228 show a composition bias toward acidic residues; sequence EDSDLFETGLEEENDSALEDEESL. Ser220 bears the Phosphoserine mark. Residues 235–245 show a composition bias toward basic residues; the sequence is VKNKVKNRKKK. At Ser255 the chain carries Phosphoserine. Composition is skewed to basic and acidic residues over residues 391–415 and 455–470; these read ACGK…DDRP and EELK…EGMP. Ser522 is modified (phosphoserine). The stretch at 599-626 forms a coiled coil; that stretch reads EKLQMLKAKLQEAMKLRRLEERQKRQAL. Positions 625 to 691 are disordered; sequence ALFKLDNEDG…SSDIGKSVAL (67 aa). Over residues 632–657 the composition is skewed to acidic residues; sequence EDGFEEEEEEEEMTDESEEDGEEETT. The segment covering 669–679 has biased composition (basic and acidic residues); that stretch reads KDEKETDKENT. 5 positions are modified to phosphoserine: Ser698, Ser701, Ser709, Ser722, and Ser740. Residues 713–750 form a disordered region; the sequence is MGYFPTEEKSETDEYLAKQSDKLDEDDSSSLLTKESSH. Residues 741 to 750 are compositionally biased toward low complexity; the sequence is SSLLTKESSH. Phosphoserine is present on residues Ser785, Ser787, Ser810, Ser816, and Ser823. An N6-acetyllysine modification is found at Lys868. 2 CKB motif repeats span residues 887–896 and 917–926; these read ELLDLCTGQF and ELLNLCSGKF. Thr893 bears the Phosphothreonine; by CHEK1 mark. Disordered regions lie at residues 924 to 1002 and 1032 to 1052; these read GKFP…NDEE and EDEA…DGEE. At Ser932 the chain carries Phosphoserine. The stretch at 954–963 is one CKB motif 3 repeat; the sequence is EALALCSGSF. Positions 966-1063 are acidic patch; the sequence is DREEEGEEEE…DEYEEDVIDE (98 aa). Acidic residues-rich tracts occupy residues 967 to 977, 990 to 1002, and 1043 to 1052; these read REEEGEEEEFG, SDED…NDEE, and GSEDEYDGEE. Residues Ser990, Ser996, and Ser998 each carry the phosphoserine modification. The stretch at 1001 to 1036 forms a coiled coil; the sequence is EELALDLEDDEEELLKQSEKMKRQMRLKKYLEDEAE. A phosphoserine mark is found at Ser1133 and Ser1265. Residues 1264–1315 are disordered; sequence LSPTKAEAAKDSSKPQVRRRGLSSMMSPSPKRLKTNGSSPGPKRSIFRYLES.

The protein belongs to the claspin family. Interacts (phosphorylation-dependent) with CHEK1; regulates CLSPN function in checkpoint for DNA damage and replication. Interacts with ATR and RAD9A and these interactions are slightly reduced during checkpoint activation. Interacts with BRCA1 and this interaction increases during checkpoint activation. Interacts with TIMELESS; the interaction is required for leading-strand replication. Associates with the MCM2-7 complex and other replisome factors. Interacts (via the acidic patch) with CDC7; the interaction is required for phosphorylation of MCM proteins and CLASPIN by CDC7. Interacts with PCNA. Interacts with FZR1. Post-translationally, phosphorylated. Undergoes ATR-dependent phosphorylation by CHEK1 during activation of DNA replication or damage checkpoints. Phosphorylation by CSNK1G1/CK1 promotes CHEK1 binding. Phosphorylated by CDC7 during DNA replication, phosphorylation inhibits interaction between the acidic patch and N-terminal segments leading to increased binding to DNA and PCNA. Ubiquitinated by the anaphase promoting complex/cyclosome (APC/C) during G1 phase, leading to its degradation by the proteasome. Ubiquitination is mediated via its interaction with FZR1/CDH1. Following DNA damage, it is deubiquitinated by USP28 in G2 phase, preventing its degradation. In terms of processing, proteolytically cleaved by caspase-7 (CASP7) in response to apoptosis, leading to its inactivation.

The protein localises to the nucleus. Required for checkpoint mediated cell cycle arrest in response to inhibition of DNA replication or to DNA damage induced by both ionizing and UV irradiation. Adapter protein which binds to BRCA1 and the checkpoint kinase CHEK1 and facilitates the ATR-dependent phosphorylation of both proteins. Also required to maintain normal rates of replication fork progression during unperturbed DNA replication. Binds directly to DNA, with particular affinity for branched or forked molecules and interacts with multiple protein components of the replisome such as the MCM2-7 complex and TIMELESS. Important for initiation of DNA replication, recruits kinase CDC7 to phosphorylate MCM2-7 components. In Mus musculus (Mouse), this protein is Claspin (Clspn).